The following is a 255-amino-acid chain: 3-deoxy-manno-octulosonate cytidylyltransferase (255 aa).

Belongs to the KdsB family.

The protein resides in the cytoplasm. It carries out the reaction 3-deoxy-alpha-D-manno-oct-2-ulosonate + CTP = CMP-3-deoxy-beta-D-manno-octulosonate + diphosphate. It participates in nucleotide-sugar biosynthesis; CMP-3-deoxy-D-manno-octulosonate biosynthesis; CMP-3-deoxy-D-manno-octulosonate from 3-deoxy-D-manno-octulosonate and CTP: step 1/1. It functions in the pathway bacterial outer membrane biogenesis; lipopolysaccharide biosynthesis. Activates KDO (a required 8-carbon sugar) for incorporation into bacterial lipopolysaccharide in Gram-negative bacteria. This chain is 3-deoxy-manno-octulosonate cytidylyltransferase, found in Cellvibrio japonicus (strain Ueda107) (Pseudomonas fluorescens subsp. cellulosa).